A 119-amino-acid polypeptide reads, in one-letter code: Beta-2-microglobulin (119 aa).

Residues 1–20 form the signal peptide; the sequence is MARFVVVALLVLLSLSGLEA. The region spanning 25–114 is the Ig-like C1-type domain; it reads PKIQVYSRHP…VTLSTPKTVK (90 aa). A disulfide bridge links C45 with C100.

Belongs to the beta-2-microglobulin family. As to quaternary structure, heterodimer of an alpha chain and a beta chain. Beta-2-microglobulin is the beta-chain of major histocompatibility complex class I molecules.

The protein localises to the secreted. Functionally, component of the class I major histocompatibility complex (MHC). Involved in the presentation of peptide antigens to the immune system. The sequence is that of Beta-2-microglobulin (B2M) from Aotus lemurinus (Gray-bellied night monkey).